Reading from the N-terminus, the 498-residue chain is Phosphatidylserine synthase (498 aa).

A disordered region spans residues 1–65 (MKKRTNSRGT…GSVSSAGARR (65 aa)). Over 1 to 92 (MKKRTNSRGT…VDDISLDFFY (92 aa)) the chain is Cytoplasmic. Over residues 7-25 (SRGTPTSSGDALLDTSFSS) the composition is skewed to polar residues. Residues 93-113 (KPHTITLLAVSVLAVMYFAFV) traverse the membrane as a helical segment. Residues 114-122 (RNEANVDEN) are Lumenal-facing. A helical membrane pass occupies residues 123–143 (LWAGLLCIVFFFLIVSVIAFP). Residues 144–153 (NGPFTRPHPA) lie on the Cytoplasmic side of the membrane. The chain crosses the membrane as a helical span at residues 154 to 174 (VWRILFGCSVLYLLTLQFLMF). The Lumenal segment spans residues 175 to 239 (QNYPTIRSIF…AFKAILIRHM (65 aa)). Residue Asn205 is glycosylated (N-linked (GlcNAc...) asparagine). A helical membrane pass occupies residues 240 to 260 (GILWAISVMWEITEITFAHLL). Topologically, residues 261–266 (PNFIEC) are cytoplasmic. The chain crosses the membrane as a helical span at residues 267-287 (WWDALILDVIICNGLGIWMGL). At 288–339 (KICQILEMREYKWASIKDISTTTGKIKRAMLQFTPESWSAIRWLDPKSTAMR) the chain is on the lumenal side. The chain crosses the membrane as a helical span at residues 340-360 (FAAVIQLVIFWQVTELNTFFL). The Cytoplasmic segment spans residues 361-367 (KHIFEMP). Residues 368-388 (PDHFIVIGRLIFIGLFVAPSV) traverse the membrane as a helical segment. The Lumenal portion of the chain corresponds to 389–402 (RQYYVYVTDTRCKR). Residues 403–423 (VGTQCWVYGAIMVSEAILCIK) form a helical membrane-spanning segment. Residues 424-436 (NGKELFERTQAIN) lie on the Cytoplasmic side of the membrane. Residues 437–457 (IVLWLTVQVIISVAFVYLAVY) traverse the membrane as a helical segment. The Lumenal portion of the chain corresponds to 458 to 498 (WQQRQLKKVSSTPAKTKETIPASSSSPSKGKLSPQKEKKLK). The disordered stretch occupies residues 465–498 (KVSSTPAKTKETIPASSSSPSKGKLSPQKEKKLK). Over residues 478–490 (PASSSSPSKGKLS) the composition is skewed to low complexity.

This sequence belongs to the phosphatidyl serine synthase family.

The protein resides in the endoplasmic reticulum membrane. It catalyses the reaction a 1,2-diacyl-sn-glycero-3-phosphoethanolamine + L-serine = a 1,2-diacyl-sn-glycero-3-phospho-L-serine + ethanolamine. Its pathway is phospholipid metabolism; phosphatidylserine biosynthesis. In terms of biological role, catalyzes a base-exchange reaction in which the polar head group of phosphatidylethanolamine (PE) is replaced by L-serine. This is Phosphatidylserine synthase from Drosophila melanogaster (Fruit fly).